The following is a 147-amino-acid chain: Small ribosomal subunit protein uS12 (147 aa).

It belongs to the universal ribosomal protein uS12 family. In terms of assembly, part of the 30S ribosomal subunit.

In terms of biological role, with S4 and S5 plays an important role in translational accuracy. Located at the interface of the 30S and 50S subunits. The protein is Small ribosomal subunit protein uS12 of Pyrobaculum calidifontis (strain DSM 21063 / JCM 11548 / VA1).